The following is a 214-amino-acid chain: Response regulator GacA (214 aa).

In terms of domain architecture, Response regulatory spans 3 to 119; it reads KVLVVDDHDL…EMVQAIRLVF (117 aa). Residue D54 is modified to 4-aspartylphosphate. The HTH luxR-type domain maps to 143 to 208; that stretch reads NNSPFDLLSE…ELALLAVRHG (66 aa). A DNA-binding region (H-T-H motif) is located at residues 167–186; sequence VQTISDKLCLSPKTVNTYRY.

Post-translationally, phosphorylated by LemA.

Forms part of a two-component regulatory system GacA/GacA(LemA). May be involved in lesion formation, swarming and in the production of extracellular protease, syringomycin and N-acyl-L-homoserine lactone (acyl-HSL). This Pseudomonas syringae pv. syringae (strain B728a) protein is Response regulator GacA (gacA).